Consider the following 203-residue polypeptide: LexA repressor (203 aa).

Residues 28-48 constitute a DNA-binding region (H-T-H motif); the sequence is RAEIASQLGFRSPNAAEEHLK. Catalysis depends on for autocatalytic cleavage activity residues Ser-120 and Lys-157.

It belongs to the peptidase S24 family. In terms of assembly, homodimer.

It catalyses the reaction Hydrolysis of Ala-|-Gly bond in repressor LexA.. Represses a number of genes involved in the response to DNA damage (SOS response), including recA and lexA. Binds to the 16 bp palindromic sequence 5'-CTGTATATATATACAG-3'. In the presence of single-stranded DNA, RecA interacts with LexA causing an autocatalytic cleavage which disrupts the DNA-binding part of LexA, leading to derepression of the SOS regulon and eventually DNA repair. The chain is LexA repressor from Proteus mirabilis (strain HI4320).